The primary structure comprises 264 residues: Anamorsin homolog 2 (264 aa).

An N-terminal SAM-like domain region spans residues 1–142 (MAATAAALAV…KVSWSMGSSF (142 aa)). A linker region spans residues 143–174 (PLKKATKGLPKIQIDDDSELIDEDSLLTEDDL). Positions 185, 194, 197, and 199 each coordinate [2Fe-2S] cluster. Positions 185–199 (CEVGATRKACKNCTC) are fe-S binding site A. Residues Cys225, Cys228, Cys236, and Cys239 each contribute to the [4Fe-4S] cluster site. 2 short sequence motifs (cx2C motif) span residues 225–228 (CGNC) and 236–239 (CGTC). Residues 225–239 (CGNCGLGDAFRCGTC) are fe-S binding site B.

It belongs to the anamorsin family. As to quaternary structure, monomer. [2Fe-2S] cluster serves as cofactor. It depends on [4Fe-4S] cluster as a cofactor.

The protein localises to the cytoplasm. Its subcellular location is the mitochondrion intermembrane space. Its function is as follows. Component of the cytosolic iron-sulfur (Fe-S) protein assembly (CIA) machinery. Required for the maturation of extramitochondrial Fe-S proteins. Part of an electron transfer chain functioning in an early step of cytosolic Fe-S biogenesis, facilitating the de novo assembly of a [4Fe-4S] cluster on the cytosolic Fe-S scaffold complex. Electrons are transferred from NADPH via a FAD- and FMN-containing diflavin oxidoreductase. Together with the diflavin oxidoreductase, also required for the assembly of the diferric tyrosyl radical cofactor of ribonucleotide reductase (RNR), probably by providing electrons for reduction during radical cofactor maturation in the catalytic small subunit. The protein is Anamorsin homolog 2 of Oryza sativa subsp. indica (Rice).